The primary structure comprises 185 residues: Ribosome-recycling factor (185 aa).

It belongs to the RRF family.

Its subcellular location is the cytoplasm. In terms of biological role, responsible for the release of ribosomes from messenger RNA at the termination of protein biosynthesis. May increase the efficiency of translation by recycling ribosomes from one round of translation to another. This chain is Ribosome-recycling factor, found in Bacillus cereus (strain B4264).